Consider the following 133-residue polypeptide: Large ribosomal subunit protein bL12 (133 aa).

Positions 98–118 (DMVESTPKPIKEGTGKEDAED) are disordered.

It belongs to the bacterial ribosomal protein bL12 family. As to quaternary structure, homodimer. Part of the ribosomal stalk of the 50S ribosomal subunit. Forms a multimeric L10(L12)X complex, where L10 forms an elongated spine to which 2 to 4 L12 dimers bind in a sequential fashion. Binds GTP-bound translation factors.

Forms part of the ribosomal stalk which helps the ribosome interact with GTP-bound translation factors. Is thus essential for accurate translation. This is Large ribosomal subunit protein bL12 from Crocosphaera subtropica (strain ATCC 51142 / BH68) (Cyanothece sp. (strain ATCC 51142)).